The following is a 396-amino-acid chain: S-adenosylmethionine synthase (396 aa).

H16 provides a ligand contact to ATP. D18 is a binding site for Mg(2+). Position 44 (E44) interacts with K(+). 2 residues coordinate L-methionine: E57 and Q100. The flexible loop stretch occupies residues 100 to 110 (QSPDIAQGVDR). Residues 167-169 (DAK), 232-233 (RF), D241, 247-248 (RK), A264, and K268 each bind ATP. D241 is a binding site for L-methionine. L-methionine is bound at residue K272.

Belongs to the AdoMet synthase family. Homotetramer; dimer of dimers. Requires Mg(2+) as cofactor. It depends on K(+) as a cofactor.

The protein localises to the cytoplasm. The catalysed reaction is L-methionine + ATP + H2O = S-adenosyl-L-methionine + phosphate + diphosphate. The protein operates within amino-acid biosynthesis; S-adenosyl-L-methionine biosynthesis; S-adenosyl-L-methionine from L-methionine: step 1/1. Functionally, catalyzes the formation of S-adenosylmethionine (AdoMet) from methionine and ATP. The overall synthetic reaction is composed of two sequential steps, AdoMet formation and the subsequent tripolyphosphate hydrolysis which occurs prior to release of AdoMet from the enzyme. The polypeptide is S-adenosylmethionine synthase (Ralstonia pickettii (strain 12J)).